The following is a 430-amino-acid chain: Rho GTPase-activating protein 2 (430 aa).

The interval 1 to 36 is disordered; that stretch reads MTGLVMMTKGGGCGGGGKGGRRKSTAEEEEEEEQNQ. The span at 9 to 18 shows a compositional bias: gly residues; the sequence is KGGGCGGGGK. A CRIB domain is found at 80 to 93; sequence IGWPTNVRHITHVT. Residues 125-310 form the Rho-GAP domain; it reads VSAESMQCSY…TLAEREENAT (186 aa). The disordered stretch occupies residues 307–372; that stretch reads ENATGSEGYS…HLSRHSTHED (66 aa). The segment covering 316–326 has biased composition (low complexity); the sequence is SPSHSSNSQTD. Residues 347–356 are compositionally biased toward acidic residues; sequence ECGEEEEVEE. Residues 357–371 show a composition bias toward basic and acidic residues; that stretch reads VEQHQEHLSRHSTHE.

In terms of assembly, homodimerizes via its Rho-GAP domain and forms a tetrameric complex (2:2) with ARAC1/ROP3, ARAC2/ROP7, ARAC4/ROP2, ARAC5/ROP4, ARAC7/ROP9 or ARAC11/ROP1.

Functionally, acts as a GTPase activator for the Rac-type GTPase by converting it to an inactive GDP-bound state. The chain is Rho GTPase-activating protein 2 (ROPGAP2) from Arabidopsis thaliana (Mouse-ear cress).